Reading from the N-terminus, the 108-residue chain is Tubulin-specific chaperone A (108 aa).

A2 is subject to N-acetylalanine.

Belongs to the TBCA family. Supercomplex made of cofactors A to E. Cofactors A and D function by capturing and stabilizing tubulin in a quasi-native conformation. Cofactor E binds to the cofactor D-tubulin complex; interaction with cofactor C then causes the release of tubulin polypeptides that are committed to the native state. In terms of tissue distribution, widely expressed, but is most abundant in the testis.

Its subcellular location is the cytoplasm. It localises to the cytoskeleton. Tubulin-folding protein; involved in the early step of the tubulin folding pathway. In Mus musculus (Mouse), this protein is Tubulin-specific chaperone A (Tbca).